We begin with the raw amino-acid sequence, 144 residues long: Deoxyuridine 5'-triphosphate nucleotidohydrolase (144 aa).

Substrate is bound by residues R63–G65, N76, and T80–D82.

The protein belongs to the dUTPase family. The cofactor is Mg(2+).

It catalyses the reaction dUTP + H2O = dUMP + diphosphate + H(+). The protein operates within pyrimidine metabolism; dUMP biosynthesis; dUMP from dCTP (dUTP route): step 2/2. In terms of biological role, this enzyme is involved in nucleotide metabolism: it produces dUMP, the immediate precursor of thymidine nucleotides and it decreases the intracellular concentration of dUTP so that uracil cannot be incorporated into DNA. The sequence is that of Deoxyuridine 5'-triphosphate nucleotidohydrolase from Bacteroides fragilis (strain YCH46).